The following is a 244-amino-acid chain: Ubiquinone/menaquinone biosynthesis C-methyltransferase UbiE (244 aa).

Residues threonine 70, aspartate 91, and 117 to 118 (DA) each bind S-adenosyl-L-methionine.

This sequence belongs to the class I-like SAM-binding methyltransferase superfamily. MenG/UbiE family.

The enzyme catalyses a 2-demethylmenaquinol + S-adenosyl-L-methionine = a menaquinol + S-adenosyl-L-homocysteine + H(+). It catalyses the reaction a 2-methoxy-6-(all-trans-polyprenyl)benzene-1,4-diol + S-adenosyl-L-methionine = a 5-methoxy-2-methyl-3-(all-trans-polyprenyl)benzene-1,4-diol + S-adenosyl-L-homocysteine + H(+). It functions in the pathway quinol/quinone metabolism; menaquinone biosynthesis; menaquinol from 1,4-dihydroxy-2-naphthoate: step 2/2. Its pathway is cofactor biosynthesis; ubiquinone biosynthesis. Its function is as follows. Methyltransferase required for the conversion of demethylmenaquinol (DMKH2) to menaquinol (MKH2) and the conversion of 2-polyprenyl-6-methoxy-1,4-benzoquinol (DDMQH2) to 2-polyprenyl-3-methyl-6-methoxy-1,4-benzoquinol (DMQH2). The protein is Ubiquinone/menaquinone biosynthesis C-methyltransferase UbiE of Nitrosospira multiformis (strain ATCC 25196 / NCIMB 11849 / C 71).